The sequence spans 308 residues: Aspartate carbamoyltransferase catalytic subunit (308 aa).

The carbamoyl phosphate site is built by Arg-57 and Thr-58. Residue Lys-86 participates in L-aspartate binding. 3 residues coordinate carbamoyl phosphate: Arg-107, His-135, and Gln-138. Residues Arg-167 and Arg-228 each coordinate L-aspartate. Carbamoyl phosphate contacts are provided by Leu-267 and Pro-268.

It belongs to the aspartate/ornithine carbamoyltransferase superfamily. ATCase family. In terms of assembly, heterooligomer of catalytic and regulatory chains.

It carries out the reaction carbamoyl phosphate + L-aspartate = N-carbamoyl-L-aspartate + phosphate + H(+). It functions in the pathway pyrimidine metabolism; UMP biosynthesis via de novo pathway; (S)-dihydroorotate from bicarbonate: step 2/3. Functionally, catalyzes the condensation of carbamoyl phosphate and aspartate to form carbamoyl aspartate and inorganic phosphate, the committed step in the de novo pyrimidine nucleotide biosynthesis pathway. In Methanococcoides burtonii (strain DSM 6242 / NBRC 107633 / OCM 468 / ACE-M), this protein is Aspartate carbamoyltransferase catalytic subunit.